Reading from the N-terminus, the 195-residue chain is Probable nicotinate-nucleotide adenylyltransferase (195 aa).

The protein belongs to the NadD family.

The enzyme catalyses nicotinate beta-D-ribonucleotide + ATP + H(+) = deamido-NAD(+) + diphosphate. It participates in cofactor biosynthesis; NAD(+) biosynthesis; deamido-NAD(+) from nicotinate D-ribonucleotide: step 1/1. Catalyzes the reversible adenylation of nicotinate mononucleotide (NaMN) to nicotinic acid adenine dinucleotide (NaAD). This Salinibacter ruber (strain DSM 13855 / M31) protein is Probable nicotinate-nucleotide adenylyltransferase.